The primary structure comprises 320 residues: BTB and MATH domain-containing protein 36 (320 aa).

One can recognise an MATH domain in the interval 7–136 (KGSIRFEIQN…DKHAVLEVQI (130 aa)). Residues 160-227 (TDVVLVLEGK…IYPTHMLINS (68 aa)) form the BTB domain.

The polypeptide is BTB and MATH domain-containing protein 36 (bath-36) (Caenorhabditis elegans).